The chain runs to 176 residues: Inner membrane-spanning protein YciB (176 aa).

6 consecutive transmembrane segments (helical) span residues 3–23, 24–44, 49–69, 81–101, 121–141, and 149–169; these read FLFDLFPIILFFAAFKVWGIF, TATAVAIVATLAQVAWVAFRH, TMLWVSLGVIVVFGGATLVLH, LYWLFAIGLLAARYAFGNNLI, VAWALFFAVLGLANLYVVHNF, and FKLFGTTGAMVVFIILQSLWL.

It belongs to the YciB family.

It localises to the cell inner membrane. Functionally, plays a role in cell envelope biogenesis, maintenance of cell envelope integrity and membrane homeostasis. This chain is Inner membrane-spanning protein YciB, found in Burkholderia vietnamiensis (strain G4 / LMG 22486) (Burkholderia cepacia (strain R1808)).